We begin with the raw amino-acid sequence, 929 residues long: Protocadherin gamma-B3 (929 aa).

The N-terminal stretch at 1–30 (MGNSSGWRGPAGQRRMLFLFLLSLLDQALS) is a signal peptide. Cadherin domains lie at 31–133 (EPIR…PPTF), 134–242 (SQNI…PPVF), 243–347 (TQDM…APEI), 348–452 (TLAS…VPVF), 453–562 (HQAS…APLV), and 570–675 (EGSA…QPDL). Residues 31–691 (EPIRYAIPEE…SDPQAELQFH (661 aa)) are Extracellular-facing. Asparagine 136 is a glycosylation site (N-linked (GlcNAc...) asparagine). N-linked (GlcNAc...) asparagine glycans are attached at residues asparagine 419 and asparagine 545. Residues 692–712 (LVVALALISVLFLLAVILAIS) form a helical membrane-spanning segment. Over 713–929 (LRLRCSSRPA…KKKSGKKEKK (217 aa)) the chain is Cytoplasmic. 2 disordered regions span residues 791-838 (NDNP…WPNN) and 899-929 (ATLT…KEKK). Over residues 919–929 (NKKKSGKKEKK) the composition is skewed to basic residues.

Its subcellular location is the cell membrane. Potential calcium-dependent cell-adhesion protein. May be involved in the establishment and maintenance of specific neuronal connections in the brain. The sequence is that of Protocadherin gamma-B3 (PCDHGB3) from Homo sapiens (Human).